A 646-amino-acid chain; its full sequence is MIKITFPDGSVREYNEGVTGLQIAESISSRLAQDVLACGVNGETIDLSRPINEDANFVLYKWEDEQGKHAFWHTSAHLLAEALQELYPGIQFGIGPAIENGFYYDVDPGEAIIKEADLPAIEAKMAELAAKKEILVRQSIAKEDALKKFGERGETYKCELISELEDGHITTYTQGAFTDLCRGPHLTSTAPIKAIKLLTVAGAYWRGQEDRKQMTRIYGITFPKKKMLDEYLVMLEEAKKRDHRKIGKEMDLFMFTDMVGKGLPMWLPKGTALRIRLQDFLRRIQARYDYQEVMCPPIGNKNLYITSGHYAKYGKDSFQPIHTPEEGEEYFLKPMNCPHHCMIYKNSPRSYKDLPLRIAEFGTVCRYEQSGELHGLTRVRSFTQDDAHLFCRPDQVKEEFLRVMDIINIVFKSMNFENVEAQISLRDKVNREKYIGSDENWEKAEQAIIEACEEKGLTAKVEYGEAAFYGPKLDFMVKDAIGRRWQLGTIQVDYNLPERFQLEYMGSDNQKHRPVMIHRAPFGSMERFVAVLIEHTAGKFPLWLTPDQVAILPISEKFNEYAEQVKAELRKFDVRAIVDDRNEKIGRKIRDNEMKRIPYMLIVGEKEAENGEVAVRKQGEGDKGTMKIEEFGKNLAEEVSNMINKW.

Positions 1 to 61 (MIKITFPDGS…NEDANFVLYK (61 aa)) constitute a TGS domain. The tract at residues 242 to 541 (DHRKIGKEMD…LIEHTAGKFP (300 aa)) is catalytic. Zn(2+) contacts are provided by C337, H388, and H518.

This sequence belongs to the class-II aminoacyl-tRNA synthetase family. As to quaternary structure, homodimer. Requires Zn(2+) as cofactor.

It localises to the cytoplasm. It carries out the reaction tRNA(Thr) + L-threonine + ATP = L-threonyl-tRNA(Thr) + AMP + diphosphate + H(+). Functionally, catalyzes the attachment of threonine to tRNA(Thr) in a two-step reaction: L-threonine is first activated by ATP to form Thr-AMP and then transferred to the acceptor end of tRNA(Thr). Also edits incorrectly charged L-seryl-tRNA(Thr). In Phocaeicola vulgatus (strain ATCC 8482 / DSM 1447 / JCM 5826 / CCUG 4940 / NBRC 14291 / NCTC 11154) (Bacteroides vulgatus), this protein is Threonine--tRNA ligase.